The following is a 137-amino-acid chain: Profilin-3 (137 aa).

Belongs to the profilin family. As to quaternary structure, interacts with ACTRT3. Detected in round spermatids.

The protein resides in the cytoplasm. It localises to the cytoskeleton. The protein localises to the nucleus. Binds to actin and affects the structure of the cytoskeleton. Slightly reduces actin polymerization. Binds to poly-L-proline, phosphatidylinositol 3-phosphate (PtdIns(3)P), phosphatidylinositol 4,5-bisphosphate (PtdIns(4,5)P2), and phosphatidylinositol 4-phosphate (PtdIns(4)P). May be involved in spermatogenesis. The protein is Profilin-3 (Pfn3) of Rattus norvegicus (Rat).